The following is a 345-amino-acid chain: Holliday junction branch migration complex subunit RuvB (345 aa).

A large ATPase domain (RuvB-L) region spans residues 4-185 (LDNRFVTPLS…FGVLCPMEFY (182 aa)). Residues leucine 24, arginine 25, glycine 66, lysine 69, threonine 70, threonine 71, 132 to 134 (EDY), arginine 175, tyrosine 185, and arginine 222 contribute to the ATP site. Threonine 70 contacts Mg(2+). The tract at residues 186 to 256 (NEEELKDIIV…MTNKALNLLE (71 aa)) is small ATPAse domain (RuvB-S). A head domain (RuvB-H) region spans residues 259–345 (KEGFDSIDTK…ENINQYKFKI (87 aa)). DNA is bound by residues arginine 314 and arginine 319.

This sequence belongs to the RuvB family. In terms of assembly, homohexamer. Forms an RuvA(8)-RuvB(12)-Holliday junction (HJ) complex. HJ DNA is sandwiched between 2 RuvA tetramers; dsDNA enters through RuvA and exits via RuvB. An RuvB hexamer assembles on each DNA strand where it exits the tetramer. Each RuvB hexamer is contacted by two RuvA subunits (via domain III) on 2 adjacent RuvB subunits; this complex drives branch migration. In the full resolvosome a probable DNA-RuvA(4)-RuvB(12)-RuvC(2) complex forms which resolves the HJ.

It localises to the cytoplasm. It carries out the reaction ATP + H2O = ADP + phosphate + H(+). Its function is as follows. The RuvA-RuvB-RuvC complex processes Holliday junction (HJ) DNA during genetic recombination and DNA repair, while the RuvA-RuvB complex plays an important role in the rescue of blocked DNA replication forks via replication fork reversal (RFR). RuvA specifically binds to HJ cruciform DNA, conferring on it an open structure. The RuvB hexamer acts as an ATP-dependent pump, pulling dsDNA into and through the RuvAB complex. RuvB forms 2 homohexamers on either side of HJ DNA bound by 1 or 2 RuvA tetramers; 4 subunits per hexamer contact DNA at a time. Coordinated motions by a converter formed by DNA-disengaged RuvB subunits stimulates ATP hydrolysis and nucleotide exchange. Immobilization of the converter enables RuvB to convert the ATP-contained energy into a lever motion, pulling 2 nucleotides of DNA out of the RuvA tetramer per ATP hydrolyzed, thus driving DNA branch migration. The RuvB motors rotate together with the DNA substrate, which together with the progressing nucleotide cycle form the mechanistic basis for DNA recombination by continuous HJ branch migration. Branch migration allows RuvC to scan DNA until it finds its consensus sequence, where it cleaves and resolves cruciform DNA. In Clostridium tetani (strain Massachusetts / E88), this protein is Holliday junction branch migration complex subunit RuvB.